Here is a 449-residue protein sequence, read N- to C-terminus: Bifunctional protein GlmU (449 aa).

A pyrophosphorylase region spans residues 1-226 (MVAVAILAAG…FQEISGINDR (226 aa)). Residues 7 to 10 (LAAG), Lys21, Gln73, and 78 to 79 (GT) contribute to the UDP-N-acetyl-alpha-D-glucosamine site. Residue Asp103 participates in Mg(2+) binding. UDP-N-acetyl-alpha-D-glucosamine is bound by residues Gly140, Glu155, Asn170, and Asn224. A Mg(2+)-binding site is contributed by Asn224. A linker region spans residues 227 to 247 (FQLSAAYEILQDRIKEKWMKA). Residues 248 to 449 (GVMIHQPDTV…KEIKGWRLQS (202 aa)) are N-acetyltransferase. 2 residues coordinate UDP-N-acetyl-alpha-D-glucosamine: Arg329 and Lys347. Residue His359 is the Proton acceptor of the active site. UDP-N-acetyl-alpha-D-glucosamine-binding residues include Tyr362 and Asn373. Acetyl-CoA contacts are provided by residues Ala376, 382-383 (NY), Ala419, and Arg436.

This sequence in the N-terminal section; belongs to the N-acetylglucosamine-1-phosphate uridyltransferase family. The protein in the C-terminal section; belongs to the transferase hexapeptide repeat family. Homotrimer. Requires Mg(2+) as cofactor.

Its subcellular location is the cytoplasm. It carries out the reaction alpha-D-glucosamine 1-phosphate + acetyl-CoA = N-acetyl-alpha-D-glucosamine 1-phosphate + CoA + H(+). The enzyme catalyses N-acetyl-alpha-D-glucosamine 1-phosphate + UTP + H(+) = UDP-N-acetyl-alpha-D-glucosamine + diphosphate. Its pathway is nucleotide-sugar biosynthesis; UDP-N-acetyl-alpha-D-glucosamine biosynthesis; N-acetyl-alpha-D-glucosamine 1-phosphate from alpha-D-glucosamine 6-phosphate (route II): step 2/2. The protein operates within nucleotide-sugar biosynthesis; UDP-N-acetyl-alpha-D-glucosamine biosynthesis; UDP-N-acetyl-alpha-D-glucosamine from N-acetyl-alpha-D-glucosamine 1-phosphate: step 1/1. It participates in bacterial outer membrane biogenesis; LPS lipid A biosynthesis. Its function is as follows. Catalyzes the last two sequential reactions in the de novo biosynthetic pathway for UDP-N-acetylglucosamine (UDP-GlcNAc). The C-terminal domain catalyzes the transfer of acetyl group from acetyl coenzyme A to glucosamine-1-phosphate (GlcN-1-P) to produce N-acetylglucosamine-1-phosphate (GlcNAc-1-P), which is converted into UDP-GlcNAc by the transfer of uridine 5-monophosphate (from uridine 5-triphosphate), a reaction catalyzed by the N-terminal domain. In Picosynechococcus sp. (strain ATCC 27264 / PCC 7002 / PR-6) (Agmenellum quadruplicatum), this protein is Bifunctional protein GlmU.